A 137-amino-acid polypeptide reads, in one-letter code: Putative pre-16S rRNA nuclease (137 aa).

This sequence belongs to the YqgF nuclease family.

It is found in the cytoplasm. Its function is as follows. Could be a nuclease involved in processing of the 5'-end of pre-16S rRNA. This Anaeromyxobacter sp. (strain K) protein is Putative pre-16S rRNA nuclease.